The following is a 400-amino-acid chain: MTQFASPVLHSLLDTDAYKLHMQQAVFHHYYDVHVAAEFRCRGDDLLGIYADAIREQVQAMQHLRLQDDEYQWLSALPFFKADYLNWLREFRFNPEQVTVSNDNGKLDIRLSGPWREVILWEVPLLAVISEMVHRYRSPQADVAQALDTLESKLVDFSALTAGLDMSRFHLMDFGTRRRFSREVQETIVKRLQQESWFVGTSNYDLARRLSLTPMGTQAHEWFQAHQQISPDLANSQRAALAAWLEEYPDQLGIALTDCITMDAFLRDFGVEFASRYQGLRHDSGDPVEWGEKAIAHYEKLEIDPQSKTLVFSDNLDLRKAVELYRHFSSRVQLSFGIGTRLTCDIPQVKPLNIVIKLVECNGKPVAKLSDSPGKTICHDKAFVRALRKAFDLPHIKKAS.

Position 220 is a phosphohistidine; by autocatalysis (H220).

This sequence belongs to the NAPRTase family. Post-translationally, transiently phosphorylated on a His residue during the reaction cycle. Phosphorylation strongly increases the affinity for substrates and increases the rate of nicotinate D-ribonucleotide production. Dephosphorylation regenerates the low-affinity form of the enzyme, leading to product release.

It catalyses the reaction nicotinate + 5-phospho-alpha-D-ribose 1-diphosphate + ATP + H2O = nicotinate beta-D-ribonucleotide + ADP + phosphate + diphosphate. Its pathway is cofactor biosynthesis; NAD(+) biosynthesis; nicotinate D-ribonucleotide from nicotinate: step 1/1. Functionally, catalyzes the synthesis of beta-nicotinate D-ribonucleotide from nicotinate and 5-phospho-D-ribose 1-phosphate at the expense of ATP. The polypeptide is Nicotinate phosphoribosyltransferase (Escherichia coli O157:H7).